The sequence spans 485 residues: NADH-quinone oxidoreductase subunit N (485 aa).

Helical transmembrane passes span 8 to 28 (LIALLPLLIVGLTVVVVMLCI), 35 to 55 (FINSTLTVIGINLALLSLWFV), 75 to 95 (FYTGLVLVASLATSTLAYAWL), 105 to 125 (FYLLVLIATMGGILLASANHL), 127 to 147 (ALFLGIELISLPLFGMVGYAF), 159 to 179 (YTLLSAAAASFLLFGMALVYA), 203 to 223 (LLAGLGMMVVGLGFKLSLVPF), 235 to 255 (PVPVSTFLATASKIAIFAVVM), 271 to 291 (LVLAIIAFASMLFGNLMALSQ), 303 to 323 (IAHLGYLLVGLIVVQAHTLAL), 326 to 346 (VGVYLAGYLFASLGAFGVVSL), 371 to 393 (LLSSVLTVMMLSLAGIPMTLGFI), 406 to 426 (HLGWLTGAVVAGSAIGLFYYL), and 449 to 469 (ALTAGGVVVLISSLLVLLLGL).

This sequence belongs to the complex I subunit 2 family. NDH-1 is composed of 13 different subunits. Subunits NuoA, H, J, K, L, M, N constitute the membrane sector of the complex.

It is found in the cell inner membrane. The enzyme catalyses a quinone + NADH + 5 H(+)(in) = a quinol + NAD(+) + 4 H(+)(out). Functionally, NDH-1 shuttles electrons from NADH, via FMN and iron-sulfur (Fe-S) centers, to quinones in the respiratory chain. The immediate electron acceptor for the enzyme in this species is believed to be ubiquinone. Couples the redox reaction to proton translocation (for every two electrons transferred, four hydrogen ions are translocated across the cytoplasmic membrane), and thus conserves the redox energy in a proton gradient. This Sodalis glossinidius (strain morsitans) protein is NADH-quinone oxidoreductase subunit N.